Here is a 398-residue protein sequence, read N- to C-terminus: Mannitol-1-phosphate 5-dehydrogenase (398 aa).

NAD(+) is bound at residue Ala10–Gly21. The active site involves Lys221.

It belongs to the mannitol dehydrogenase family. In terms of assembly, monomer.

The enzyme catalyses D-mannitol 1-phosphate + NAD(+) = beta-D-fructose 6-phosphate + NADH + H(+). Catalyzes the NAD(H)-dependent interconversion of D-fructose 6-phosphate and D-mannitol 1-phosphate in the mannitol metabolic pathway. This chain is Mannitol-1-phosphate 5-dehydrogenase, found in Neurospora crassa (strain ATCC 24698 / 74-OR23-1A / CBS 708.71 / DSM 1257 / FGSC 987).